The primary structure comprises 305 residues: UDP-3-O-acyl-N-acetylglucosamine deacetylase (305 aa).

The Zn(2+) site is built by His-78, His-237, and Asp-241. The Proton donor role is filled by His-264.

The protein belongs to the LpxC family. Requires Zn(2+) as cofactor.

It carries out the reaction a UDP-3-O-[(3R)-3-hydroxyacyl]-N-acetyl-alpha-D-glucosamine + H2O = a UDP-3-O-[(3R)-3-hydroxyacyl]-alpha-D-glucosamine + acetate. Its pathway is glycolipid biosynthesis; lipid IV(A) biosynthesis; lipid IV(A) from (3R)-3-hydroxytetradecanoyl-[acyl-carrier-protein] and UDP-N-acetyl-alpha-D-glucosamine: step 2/6. Catalyzes the hydrolysis of UDP-3-O-myristoyl-N-acetylglucosamine to form UDP-3-O-myristoylglucosamine and acetate, the committed step in lipid A biosynthesis. The sequence is that of UDP-3-O-acyl-N-acetylglucosamine deacetylase from Cupriavidus taiwanensis (strain DSM 17343 / BCRC 17206 / CCUG 44338 / CIP 107171 / LMG 19424 / R1) (Ralstonia taiwanensis (strain LMG 19424)).